The following is a 319-amino-acid chain: MSLNFLEFEKPIAELEAKIEALRDVSRHGGDTAVDLDKEIEQLEKKSLELKQKIFSDLGAWQVAQLARHPQRPYTKDYLEHAFTEFEEMAGDRAYADDKAIVGGMARLNGRPVMVIGHQKGRETKEKVIRNFGMPKPEGYRKALRLMETAERFNMPIITFIDTAGAYPGVGAEERGQSEAIAKNLKVMAGLSVPVICNVVGEGGSGGALAIGVGDYVNMLQYSTYSVISPEGCASILWRDSDKAPQAAEAMGLVAPRLKELELIDEIIPEPLGGAHRDPIQTAQNMKDMLVKQLEELEQFDNEALLERRYQRLMSYGYC.

Residues 35-296 (DLDKEIEQLE…KDMLVKQLEE (262 aa)) enclose the CoA carboxyltransferase C-terminal domain.

It belongs to the AccA family. As to quaternary structure, acetyl-CoA carboxylase is a heterohexamer composed of biotin carboxyl carrier protein (AccB), biotin carboxylase (AccC) and two subunits each of ACCase subunit alpha (AccA) and ACCase subunit beta (AccD).

The protein resides in the cytoplasm. It carries out the reaction N(6)-carboxybiotinyl-L-lysyl-[protein] + acetyl-CoA = N(6)-biotinyl-L-lysyl-[protein] + malonyl-CoA. It participates in lipid metabolism; malonyl-CoA biosynthesis; malonyl-CoA from acetyl-CoA: step 1/1. In terms of biological role, component of the acetyl coenzyme A carboxylase (ACC) complex. First, biotin carboxylase catalyzes the carboxylation of biotin on its carrier protein (BCCP) and then the CO(2) group is transferred by the carboxyltransferase to acetyl-CoA to form malonyl-CoA. The polypeptide is Acetyl-coenzyme A carboxylase carboxyl transferase subunit alpha (Vibrio atlanticus (strain LGP32) (Vibrio splendidus (strain Mel32))).